The sequence spans 59 residues: Potassium channel toxin alpha-KTx 3.5 (59 aa).

Positions Met-1–Ala-22 are cleaved as a signal peptide. Intrachain disulfides connect Cys-29–Cys-49, Cys-35–Cys-54, and Cys-39–Cys-56. The tract at residues Gly-47–Cys-54 is interaction with Ca(2+)-activated K(+) channels.

The protein belongs to the short scorpion toxin superfamily. Potassium channel inhibitor family. Alpha-KTx 03 subfamily. In terms of tissue distribution, expressed by the venom gland.

It localises to the secreted. In terms of biological role, has also been shown to inhibit with high potency Kv1.3/KCNA3 and with low potency Kv1.1/KCNA1 and Kv1.2/KCNA2 voltage-gated potassium channels. Also binds and inhibits the molluscan calcium-activated potassium channels KCa (Kd=135 nM). The protein is Potassium channel toxin alpha-KTx 3.5 (KTX2) of Androctonus australis (Sahara scorpion).